The chain runs to 99 residues: Thylakoid membrane protein ssl2009 (99 aa).

Residues 10–30 traverse the membrane as a helical segment; sequence GFLLGTVIGGVVGGILGSVLA. A coiled-coil region spans residues 50 to 84; it reads NLDSEENIELARRRLEDKIAQLNLVIDDVRDQLGH.

The protein localises to the cellular thylakoid membrane. The chain is Thylakoid membrane protein ssl2009 from Synechocystis sp. (strain ATCC 27184 / PCC 6803 / Kazusa).